Here is a 587-residue protein sequence, read N- to C-terminus: GTPase-activating protein skywalker (587 aa).

Residues Lys-75 and Arg-79 each coordinate a 1,2-diacyl-sn-glycero-3-phospho-(1D-myo-inositol). The region spanning 84–275 (PINSPIRAQL…RIMDCYFHEG (192 aa)) is the Rab-GAP TBC domain. A 1,2-diacyl-sn-glycero-3-phospho-(1D-myo-inositol)-binding positions include Lys-277, Arg-281, and 335–339 (RGLST). One can recognise a TLDc domain in the interval 408–585 (TWTDRQFLFT…IRVLEVYGFV (178 aa)).

In terms of tissue distribution, detected in the larval ventral nerve cord and neuromuscular junction boutons (at protein level).

The protein resides in the cytoplasmic vesicle. The protein localises to the secretory vesicle. It localises to the synaptic vesicle membrane. Its subcellular location is the endosome membrane. GTPase-activating protein (GAP) for Rab35 which regulates synaptic vesicle (SV) protein recycling and turnover at the neuromuscular junction boutons and possibly ventral nerve cord via endosomal trafficking. Inhibits Rab35-mediated endosomal sorting which traffics old or dysfunctional SV proteins through a degradative endolysosomal route that involves the ESCRT pathway and the HOPS complex members dor, vps39 and rab7. This function is essential for preventing excessive degradation and turnover of vesicles from the readily releasable pool which leads to increased neurotransmission and eventually neurodegeneration. Preferentially binds phosphoinositides phosphorylated at the D5 position of the inositol ring, such as phosphatidylinositol 4,5-bisphosphate (PIP2) and phosphatidylinositol 3,4,5-trisphosphate (PIP3). Binding to phosphoinositides and thus membrane-association, is required for its function in regulating the turnover of synaptic-vesicle proteins. It is therefore likely that it is recruited to vesicle membranes with high phosphoinositide content and thereby selectively prevents endolysosomal degradation of these vesicles. This is GTPase-activating protein skywalker from Drosophila melanogaster (Fruit fly).